Here is a 319-residue protein sequence, read N- to C-terminus: Free fatty acid receptor 3 (319 aa).

Over 1-15 the chain is Extracellular; the sequence is MGTSFFLGNYWLFFS. The chain crosses the membrane as a helical span at residues 16-36; it reads VYLLVFLVGLPLNVMALVVFV. At 37–43 the chain is on the cytoplasmic side; that stretch reads GKLRRRP. The chain crosses the membrane as a helical span at residues 44 to 64; that stretch reads VAVDLLLLNLTISDLLLLLFL. The Extracellular portion of the chain corresponds to 65–98; the sequence is PFRMVEAACGMRWLLPFIFCPLSGFLFFTTIYLT. Cysteine 84 and cysteine 165 are joined by a disulfide. Residues 99-119 form a helical membrane-spanning segment; that stretch reads SLFLTAVSIERFLSVAYPLWY. The Cytoplasmic segment spans residues 120–127; that stretch reads KTRPRLAQ. Residues 128-148 traverse the membrane as a helical segment; that stretch reads AGLVSVVCWFLASAHCSVVYI. The Extracellular segment spans residues 149-183; sequence TEYWGNATYSQGTNGTCYLEFREDQLAILLPVRLE. Residues asparagine 154 and asparagine 162 are each glycosylated (N-linked (GlcNAc...) asparagine). The chain crosses the membrane as a helical span at residues 184-206; the sequence is MAVVLFMVPLCITSYCYSRLVWI. Over 207 to 218 the chain is Cytoplasmic; the sequence is LSRGASRRRRKR. Residues 219-239 form a helical membrane-spanning segment; sequence IMGLLAATLLIFFVCFGPYNM. The Extracellular portion of the chain corresponds to 240–254; it reads SHVVGYVSRESPSWR. The chain crosses the membrane as a helical span at residues 255–275; the sequence is SYVLLLSTLNSCIDPLVFYFS. Over 276–319 the chain is Cytoplasmic; it reads SSKFQADFHQLLGRLLRTCVPWTQQVSLELKVKNGEEPSKECPS.

The protein belongs to the G-protein coupled receptor 1 family. Expressed in white adipose tissue and skeletal muscle (at protein level). Abundantly expressed in sympathetic ganglia such as the superior cervical ganglion. Also expressed by intestinal endocrine cells.

The protein localises to the cell membrane. G protein-coupled receptor that is activated by a major product of dietary fiber digestion, the short chain fatty acids (SCFAs), and that plays a role in the regulation of whole-body energy homeostasis and in intestinal immunity. In omnivorous mammals, the short chain fatty acids acetate, propionate and butyrate are produced primarily by the gut microbiome that metabolizes dietary fibers. SCFAs serve as a source of energy but also act as signaling molecules. That G protein-coupled receptor is probably coupled to the pertussis toxin-sensitive, G(i/o)-alpha family of G proteins. Its activation results in the formation of inositol 1,4,5-trisphosphate, the mobilization of intracellular calcium, the phosphorylation of the MAPK3/ERK1 and MAPK1/ERK2 kinases and the inhibition of intracellular cAMP accumulation. Activated by SCFAs and by beta-hydroxybutyrate, a ketone body produced by the liver upon starvation, it inhibits N-type calcium channels and modulates the activity of sympathetic neurons through a signaling cascade involving the beta and gamma subunits of its coupled G protein, phospholipase C and MAP kinases. Thereby, it may regulate energy expenditure through the control of the sympathetic nervous system that controls for instance heart rate. Upon activation by SCFAs accumulating in the intestine, it may also signal to the brain via neural circuits which in turn would regulate intestinal gluconeogenesis. May also control the production of hormones involved in whole-body energy homeostasis. May for instance, regulate blood pressure through renin secretion. May also regulate secretion of the PYY peptide by enteroendocrine cells and control gut motility, intestinal transit rate, and the harvesting of energy from SCFAs produced by gut microbiota. May also indirectly regulate the production of LEP/Leptin, a hormone acting on the CNS to inhibit food intake, in response to the presence of short-chain fatty acids in the intestine. Finally, may also play a role in glucose homeostasis. Besides its role in energy homeostasis, may play a role in intestinal immunity. May mediate the activation of the inflammatory and immune response by SCFAs in the gut, regulating the rapid production of chemokines and cytokines by intestinal epithelial cells. Exhibits an SCFA-independent constitutive G protein-coupled receptor activity. This chain is Free fatty acid receptor 3 (Ffar3), found in Mus musculus (Mouse).